The primary structure comprises 483 residues: GDP-fucose protein O-fucosyltransferase 4 (483 aa).

A topological domain (cytoplasmic) is located at residue Met1. Residues 2 to 21 (ALCLWLFLVLPICCWCQGAV) form a helical; Signal-anchor for type II membrane protein membrane-spanning segment. The Lumenal segment spans residues 22 to 483 (DLGDSGVFQP…RARGLSNDSR (462 aa)). N-linked (GlcNAc...) asparagine glycosylation is found at Asn151 and Asn303. Cys374 and Cys377 form a disulfide bridge. The tract at residues 387-425 (RKAHRKNPKQNQPPQPKMANSSHMGCPLPSPGYGPVENV) is disordered. Residues Asn406, Asn428, Asn456, and Asn480 are each glycosylated (N-linked (GlcNAc...) asparagine).

Belongs to the glycosyltransferase 10 family.

It is found in the endoplasmic reticulum membrane. It catalyses the reaction L-threonyl-[protein] + GDP-beta-L-fucose = 3-O-(alpha-L-fucosyl)-L-threonyl-[protein] + GDP + H(+). The enzyme catalyses L-seryl-[protein] + GDP-beta-L-fucose = 3-O-(alpha-L-fucosyl)-L-seryl-[protein] + GDP + H(+). It participates in protein modification; protein glycosylation. Protein O-fucosyltransferase that specifically catalyzes O-fucosylation of serine or threonine residues in EMI domains of target proteins. Attaches fucose through an O-glycosidic linkage. O-fucosylation of EMI domain-containing proteins may be required for facilitating protein folding and secretion. This Danio rerio (Zebrafish) protein is GDP-fucose protein O-fucosyltransferase 4 (fut11).